The sequence spans 341 residues: Inositol monophosphatase 3 (341 aa).

The helical transmembrane segment at 11 to 31 (LGIAVFCLLGVGVIYHLYAGV) threads the bilayer. The Mg(2+) site is built by E117, D157, L159, D160, and D283. A substrate-binding site is contributed by E117. Residues 159-162 (LDAT) and D283 each bind substrate.

This sequence belongs to the inositol monophosphatase superfamily. Mg(2+) serves as cofactor.

It localises to the membrane. The enzyme catalyses a myo-inositol phosphate + H2O = myo-inositol + phosphate. It participates in polyol metabolism; myo-inositol biosynthesis; myo-inositol from D-glucose 6-phosphate: step 2/2. The polypeptide is Inositol monophosphatase 3 (bpnt2) (Danio rerio (Zebrafish)).